A 319-amino-acid polypeptide reads, in one-letter code: Olfactory receptor 51F1 (319 aa).

Over 1 to 37 (MLQNQDTMEILSNSTSKFPTFLLTGIPGLESAHVWIS) the chain is Extracellular. A helical transmembrane segment spans residues 38-58 (IPFCCFYAIALSGNSVILFVI). At 59–75 (ITQQSLHEPMYYFLFRL) the chain is on the cytoplasmic side. A helical transmembrane segment spans residues 76–96 (SATDLGLTVSSLSTTLGILWF). At 97-106 (EAREISLYSC) the chain is on the extracellular side. C106 and C188 are disulfide-bonded. A helical transmembrane segment spans residues 107–127 (IVQMFFLHGFTFMESGVLVAT). Over 128-149 (AFDRYVAICDPLRYTTILTNSR) the chain is Cytoplasmic. Residues 150–170 (IIQMGLLMITRAIVLILPLLL) form a helical membrane-spanning segment. Residues 171–211 (LLKPLYFCRMNALSHSYCYHPDVIQLACSDIRANSICGLID) lie on the Extracellular side of the membrane. A helical transmembrane segment spans residues 212-232 (LILTTGIDTPCIVLSYILIIH). Topologically, residues 233–249 (SVLRIASPEEWHKVFST) are cytoplasmic. Residues 250–270 (CVSHVGAVAFFYIHMLSLSLV) form a helical membrane-spanning segment. At 271–279 (YRYGRSAPR) the chain is on the extracellular side. A helical transmembrane segment spans residues 280–300 (VVHSVMANVYLLLPPVLNPII). At 301 to 319 (DSVKTKQIRKAMLSLLLTK) the chain is on the cytoplasmic side.

Belongs to the G-protein coupled receptor 1 family.

It is found in the cell membrane. In terms of biological role, odorant receptor. This chain is Olfactory receptor 51F1 (OR51F1), found in Homo sapiens (Human).